We begin with the raw amino-acid sequence, 969 residues long: Protein translocase subunit SecA (969 aa).

ATP is bound by residues glutamine 99, 117–121 (GEGKT), and aspartate 631.

The protein belongs to the SecA family. Monomer and homodimer. Part of the essential Sec protein translocation apparatus which comprises SecA, SecYEG and auxiliary proteins SecDF. Other proteins may also be involved.

It localises to the cell inner membrane. It is found in the cytoplasm. The enzyme catalyses ATP + H2O + cellular proteinSide 1 = ADP + phosphate + cellular proteinSide 2.. Functionally, part of the Sec protein translocase complex. Interacts with the SecYEG preprotein conducting channel. Has a central role in coupling the hydrolysis of ATP to the transfer of proteins into and across the cell membrane, serving as an ATP-driven molecular motor driving the stepwise translocation of polypeptide chains across the membrane. This is Protein translocase subunit SecA from Chlamydia felis (strain Fe/C-56) (Chlamydophila felis).